Reading from the N-terminus, the 313-residue chain is MADPAFVPLRPIAIKDRSSIVFLQRGQLDVVDGAFVLIDQEGVRVQIPVGGLACLMLEPGTRITHAAIVLCARVGCLVIWVGERGTRLYAAGQPGGARADRLLFQARNALDETARLNVVREMYRRRFDDDPPARRSVDQLRGMEGVRVREIYRLLAKKYAVDWNARRYDHNDWDGADIPNRCLSAATACLYGLCEAAILAAGYAPAIGFLHRGKPQSFVYDVADLYKVETVVPTAFSIAAKIAAGKGDDSPPERQVRIACRDQFRKSGLLEKIIPDIEEILRAGGLEPPLDAPEAVDPVIPPEEPSGDDGHRG.

Residues Glu-144, His-211, and Asp-224 each contribute to the Mn(2+) site. A disordered region spans residues 288–313 (PPLDAPEAVDPVIPPEEPSGDDGHRG).

The protein belongs to the CRISPR-associated endonuclease Cas1 family. Homodimer, forms a heterotetramer with a Cas2 homodimer. Mg(2+) serves as cofactor. It depends on Mn(2+) as a cofactor.

In terms of biological role, CRISPR (clustered regularly interspaced short palindromic repeat), is an adaptive immune system that provides protection against mobile genetic elements (viruses, transposable elements and conjugative plasmids). CRISPR clusters contain spacers, sequences complementary to antecedent mobile elements, and target invading nucleic acids. CRISPR clusters are transcribed and processed into CRISPR RNA (crRNA). Acts as a dsDNA endonuclease. Involved in the integration of spacer DNA into the CRISPR cassette. In Rhodospirillum rubrum (strain ATCC 11170 / ATH 1.1.1 / DSM 467 / LMG 4362 / NCIMB 8255 / S1), this protein is CRISPR-associated endonuclease Cas1 1.